We begin with the raw amino-acid sequence, 133 residues long: MNDQSCVRIMTEWDIVAARQLGRNVAKELGFGTVDQARITTAISELARNIYLYAGKGQIGIEQVADRGKKGLKIIAEDQGPGIPDIRKVMEDGFSTSGGLGAGLPGVKRLMDEFSLNSVAGEGTEIQAIKWLR.

The catalysed reaction is L-seryl-[protein] + ATP = O-phospho-L-seryl-[protein] + ADP + H(+). It catalyses the reaction L-threonyl-[protein] + ATP = O-phospho-L-threonyl-[protein] + ADP + H(+). Functionally, provides the crucial link between the upstream module (communication of environmental stress) and the downstream module (integration of the environmental signals with signals of energy stress) that compose the signal transduction pathway controlling the sigma-B factor. Phosphorylates and inactivates its specific antagonist protein RsbS thanks to its serine kinase activity. Upon phosphorylation of RsbS, RsbT is released to stimulate RsbU, a PP2C phosphatase, thereby initiating the signaling cascade that ultimately activates sigma-B. The activity of the RsbU phosphatase may be stimulated by a long-lived interaction with RsbT and the serine kinase function of RsbT is not required to directly modify RsbU. Also phosphorylates RsbR thanks to its threonine kinase activity, preventing it to phosphorylate RsbT. The protein is Serine/threonine-protein kinase RsbT (rsbT) of Bacillus subtilis (strain 168).